The primary structure comprises 455 residues: Chitin deacetylase 2 (455 aa).

Positions 1–19 (MIPSTAAALLTLTAGAAFA) are cleaved as a signal peptide. N-linked (GlcNAc...) asparagine glycans are attached at residues N86, N98, N122, and N142. Positions 157 to 347 (MTWGLGFDDG…IKSAFNYIVP (191 aa)) constitute a NodB homology domain. D164 serves as the catalytic Proton acceptor. Residue D164 coordinates acetate. Residue D165 coordinates Co(2+). N168 carries an N-linked (GlcNAc...) asparagine glycan. Positions 214 and 218 each coordinate Co(2+). Y255 contacts acetate. 2 N-linked (GlcNAc...) asparagine glycosylation sites follow: N270 and N308. H321 functions as the Proton donor in the catalytic mechanism. N-linked (GlcNAc...) asparagine glycans are attached at residues N325, N353, N362, and N377. A disordered region spans residues 381–423 (STTQKDGSSSTNTASGSGAAGSASATSSSDDSSSSGGSSGSSG). An N-linked (GlcNAc...) asparagine glycan is attached at N426. S429 carries the GPI-anchor amidated serine lipid modification. Positions 430–455 (GALGMFDSLSGVGLILGGVVAGVMLL) are cleaved as a propeptide — removed in mature form.

Belongs to the polysaccharide deacetylase family. The cofactor is Co(2+). In terms of processing, the GPI anchor is required for the attachment to the cell membrane but not for cell surface targeting.

It localises to the secreted. Its subcellular location is the cell wall. The protein resides in the cell membrane. It carries out the reaction [(1-&gt;4)-N-acetyl-beta-D-glucosaminyl](n) + n H2O = chitosan + n acetate. Functionally, hydrolyzes the N-acetamido groups of N-acetyl-D-glucosamine residues in chitin to form chitosan and acetate. Chitosan is required to anchor melanin to the cell wall, for maintenance of cell wall integrity, and for proper cytokinesis. Chitosan offers an advantage during infection as it is less readily detected than chitin by host immunosurveillance mechanisms. This is Chitin deacetylase 2 from Cryptococcus neoformans var. grubii serotype A (strain H99 / ATCC 208821 / CBS 10515 / FGSC 9487) (Filobasidiella neoformans var. grubii).